The primary structure comprises 241 residues: Uridylate kinase (241 aa).

Position 15–18 (15–18 (KLSG)) interacts with ATP. The interval 23–28 (GAEGFG) is involved in allosteric activation by GTP. G57 provides a ligand contact to UMP. ATP contacts are provided by G58 and R62. Residues D77 and 138–145 (TGNPFFTT) contribute to the UMP site. 3 residues coordinate ATP: T165, Y171, and D174.

The protein belongs to the UMP kinase family. In terms of assembly, homohexamer.

It is found in the cytoplasm. The catalysed reaction is UMP + ATP = UDP + ADP. It participates in pyrimidine metabolism; CTP biosynthesis via de novo pathway; UDP from UMP (UMPK route): step 1/1. Allosterically activated by GTP. Inhibited by UTP. Functionally, catalyzes the reversible phosphorylation of UMP to UDP. This is Uridylate kinase from Serratia proteamaculans (strain 568).